Here is a 309-residue protein sequence, read N- to C-terminus: Protein FdhE homolog (309 aa).

The protein belongs to the FdhE family.

It is found in the cytoplasm. In terms of biological role, necessary for formate dehydrogenase activity. This Pectobacterium atrosepticum (strain SCRI 1043 / ATCC BAA-672) (Erwinia carotovora subsp. atroseptica) protein is Protein FdhE homolog.